A 442-amino-acid polypeptide reads, in one-letter code: Ankyrin repeat and MYND domain-containing protein 2 (442 aa).

ANK repeat units follow at residues 45–74 (NGMT…DVNC), 79–108 (HGYT…ETDV), and 159–188 (KLAG…NPLL). Zn(2+) is bound by residues Cys320, Cys323, Cys332, Cys335, Cys341, Cys345, His353, and Cys357. The segment at 320–357 (CTTCGEKGASKRCSVCKMVIYCDQTCQKTHWFAHKKIC) adopts an MYND-type zinc-finger fold. Basic and acidic residues predominate over residues 401–421 (TRICQKNDNPKDSEEGEKESL). The interval 401 to 442 (TRICQKNDNPKDSEEGEKESLQSDAGLEGLQEAAVGPQVSEE) is disordered.

In terms of assembly, interacts with the retinal-specific guanylyl cyclase GC1.

The protein localises to the cell projection. The protein resides in the cilium. Functionally, may be involved in the trafficking of signaling proteins to the cilia. The polypeptide is Ankyrin repeat and MYND domain-containing protein 2 (ANKMY2) (Bos taurus (Bovine)).